Reading from the N-terminus, the 66-residue chain is Large ribosomal subunit protein bL33 (66 aa).

This sequence belongs to the bacterial ribosomal protein bL33 family.

The sequence is that of Large ribosomal subunit protein bL33 from Synechococcus sp. (strain CC9902).